The chain runs to 210 residues: 3-hexulose-6-phosphate synthase (210 aa).

The protein belongs to the HPS/KGPDC family. HPS subfamily.

The catalysed reaction is D-ribulose 5-phosphate + formaldehyde = D-arabino-hex-3-ulose 6-phosphate. It participates in one-carbon metabolism; formaldehyde assimilation via RuMP pathway; D-fructose 6-phosphate from D-ribulose 5-phosphate and formaldehyde: step 1/2. Its function is as follows. Catalyzes the condensation of ribulose 5-phosphate with formaldehyde to form 3-hexulose 6-phosphate. Together with HxlB, may act as a formaldehyde detoxification system. The sequence is that of 3-hexulose-6-phosphate synthase (hxlA) from Bacillus subtilis (strain 168).